The chain runs to 486 residues: Cobyric acid synthase (486 aa).

Positions 248–439 (MLRVVVPVLP…VHGLFDTPAA (192 aa)) constitute a GATase cobBQ-type domain. Cys329 serves as the catalytic Nucleophile. Residue His431 is part of the active site.

Belongs to the CobB/CobQ family. CobQ subfamily.

Its pathway is cofactor biosynthesis; adenosylcobalamin biosynthesis. Its function is as follows. Catalyzes amidations at positions B, D, E, and G on adenosylcobyrinic A,C-diamide. NH(2) groups are provided by glutamine, and one molecule of ATP is hydrogenolyzed for each amidation. This is Cobyric acid synthase from Paraburkholderia phytofirmans (strain DSM 17436 / LMG 22146 / PsJN) (Burkholderia phytofirmans).